A 137-amino-acid chain; its full sequence is Small ribosomal subunit protein uS11 (137 aa).

The segment at 1–30 is disordered; sequence MAQAKKGGAPKKGQKTRRREKKNVPHGAAH. The span at 8–21 shows a compositional bias: basic residues; that stretch reads GAPKKGQKTRRREK.

This sequence belongs to the universal ribosomal protein uS11 family. Part of the 30S ribosomal subunit. Interacts with proteins S7 and S18. Binds to IF-3.

In terms of biological role, located on the platform of the 30S subunit, it bridges several disparate RNA helices of the 16S rRNA. Forms part of the Shine-Dalgarno cleft in the 70S ribosome. In Mycolicibacterium vanbaalenii (strain DSM 7251 / JCM 13017 / BCRC 16820 / KCTC 9966 / NRRL B-24157 / PYR-1) (Mycobacterium vanbaalenii), this protein is Small ribosomal subunit protein uS11.